Reading from the N-terminus, the 130-residue chain is ATP synthase epsilon chain, chloroplastic (130 aa).

The protein belongs to the ATPase epsilon chain family. F-type ATPases have 2 components, CF(1) - the catalytic core - and CF(0) - the membrane proton channel. CF(1) has five subunits: alpha(3), beta(3), gamma(1), delta(1), epsilon(1). CF(0) has three main subunits: a, b and c.

It is found in the plastid. Its subcellular location is the chloroplast thylakoid membrane. Produces ATP from ADP in the presence of a proton gradient across the membrane. This is ATP synthase epsilon chain, chloroplastic from Tupiella akineta (Green alga).